The following is a 217-amino-acid chain: RING-H2 finger protein ATL40 (217 aa).

The helical transmembrane segment at 28–48 (IFLVTTVSFSIIIIIVFVYYL) threads the bilayer. Residues 100–142 (CAVCLSLLEEKDNARMLPNCKHVFHVSCVDTWLTTQSTCPVCR) form an RING-type; atypical zinc finger. 2 stretches are compositionally biased toward basic and acidic residues: residues 143 to 160 (TEAE…REGP) and 186 to 217 (DSFR…IERQ). A disordered region spans residues 143-217 (TEAEPSHPRL…QDRELDIERQ (75 aa)).

It belongs to the RING-type zinc finger family. ATL subfamily.

It is found in the membrane. It carries out the reaction S-ubiquitinyl-[E2 ubiquitin-conjugating enzyme]-L-cysteine + [acceptor protein]-L-lysine = [E2 ubiquitin-conjugating enzyme]-L-cysteine + N(6)-ubiquitinyl-[acceptor protein]-L-lysine.. Its pathway is protein modification; protein ubiquitination. The sequence is that of RING-H2 finger protein ATL40 (ATL40) from Arabidopsis thaliana (Mouse-ear cress).